The sequence spans 147 residues: MVHLTAEEKSSVTSLWGKMNVDEAGGEALGRLLVVYPWTQRFFDNFGNLSSSSAIMGNPKVKAHGKKVLTSFGDAIKNMDNLKGAFAKLSELHCDKLHVDPENFRLLGNVLVIILVTHFGKDFTPEVQVAWQKLVSGVATALAHKYH.

Positions His3–His147 constitute a Globin domain. Ser14 and Ser51 each carry phosphoserine. His64 and His93 together coordinate heme b.

This sequence belongs to the globin family. Heterotetramer of two alpha chains and two epsilon chains in early embryonic hemoglobin Gower-2; two zeta chains and two epsilon chains in early embryonic hemoglobin Gower-1. In terms of tissue distribution, red blood cells.

In terms of biological role, the epsilon chain is a beta-type chain of early mammalian embryonic hemoglobin. This chain is Hemoglobin subunit epsilon (HBE1), found in Carlito syrichta (Philippine tarsier).